Reading from the N-terminus, the 148-residue chain is Large ribosomal subunit protein bL9 (148 aa).

It belongs to the bacterial ribosomal protein bL9 family.

Binds to the 23S rRNA. This is Large ribosomal subunit protein bL9 from Sulfurimonas denitrificans (strain ATCC 33889 / DSM 1251) (Thiomicrospira denitrificans (strain ATCC 33889 / DSM 1251)).